Consider the following 248-residue polypeptide: 3-deoxy-manno-octulosonate cytidylyltransferase (248 aa).

The protein belongs to the KdsB family. Mg(2+) is required as a cofactor.

The protein localises to the cytoplasm. The enzyme catalyses 3-deoxy-alpha-D-manno-oct-2-ulosonate + CTP = CMP-3-deoxy-beta-D-manno-octulosonate + diphosphate. Its pathway is nucleotide-sugar biosynthesis; CMP-3-deoxy-D-manno-octulosonate biosynthesis; CMP-3-deoxy-D-manno-octulosonate from 3-deoxy-D-manno-octulosonate and CTP: step 1/1. The protein operates within bacterial outer membrane biogenesis; lipopolysaccharide biosynthesis. Functionally, activates KDO (a required 8-carbon sugar) for incorporation into bacterial lipopolysaccharide in Gram-negative bacteria. The protein is 3-deoxy-manno-octulosonate cytidylyltransferase of Escherichia coli O157:H7.